We begin with the raw amino-acid sequence, 353 residues long: (3aS,4S,5R,7aS)-5-hydroxy-7a-methyl-1-oxo-octahydro-1H-indene-4-carboxyl-CoA dehydrogenase (353 aa).

Residues 22 to 24, 171 to 173, and 194 to 195 each bind FMN; these read GMG, AGG, and GT.

It belongs to the nitronate monooxygenase family.

It carries out the reaction (3aS,4S,5R,7aS)-5-hydroxy-7a-methyl-1-oxo-octahydro-1H-indene-4-carboxyl-CoA + NAD(+) = (5R,7aS)-5-hydroxy-7a-methyl-1-oxo-2,3,5,6,7,7a-hexahydro-1H-indene-carboxyl-CoA + NADH + H(+). Its pathway is steroid metabolism; cholesterol degradation. Its function is as follows. Involved in the final steps of cholesterol and steroid degradation. Probably catalyzes the introduction of a double bound into the C ring of 5OH-HIC-CoA, leading to the formation of (5R,7aS)-5-hydroxy-7a-methyl-1-oxo-3,5,6,7-tetrahydro-2H-indene-4-carboxyl-CoA. The sequence is that of (3aS,4S,5R,7aS)-5-hydroxy-7a-methyl-1-oxo-octahydro-1H-indene-4-carboxyl-CoA dehydrogenase from Rhodococcus jostii (strain RHA1).